Here is a 338-residue protein sequence, read N- to C-terminus: Fructose-1,6-bisphosphatase class 1 (338 aa).

Positions 90, 112, 114, and 115 each coordinate Mg(2+). Residues 115–118 (DGSS), Asn-207, and Lys-273 contribute to the substrate site. A Mg(2+)-binding site is contributed by Glu-279.

The protein belongs to the FBPase class 1 family. As to quaternary structure, homotetramer. It depends on Mg(2+) as a cofactor.

It localises to the cytoplasm. It catalyses the reaction beta-D-fructose 1,6-bisphosphate + H2O = beta-D-fructose 6-phosphate + phosphate. It participates in carbohydrate biosynthesis; gluconeogenesis. This is Fructose-1,6-bisphosphatase class 1 from Stenotrophomonas maltophilia (strain R551-3).